A 351-amino-acid chain; its full sequence is 4-hydroxy-3-methylbut-2-enyl diphosphate reductase (351 aa).

A [4Fe-4S] cluster-binding site is contributed by Cys18. His47 and His83 together coordinate (2E)-4-hydroxy-3-methylbut-2-enyl diphosphate. The dimethylallyl diphosphate site is built by His47 and His83. His47 and His83 together coordinate isopentenyl diphosphate. Cys105 contributes to the [4Fe-4S] cluster binding site. His133 contacts (2E)-4-hydroxy-3-methylbut-2-enyl diphosphate. His133 is a binding site for dimethylallyl diphosphate. His133 lines the isopentenyl diphosphate pocket. The active-site Proton donor is Glu135. Residue Thr174 coordinates (2E)-4-hydroxy-3-methylbut-2-enyl diphosphate. A [4Fe-4S] cluster-binding site is contributed by Cys204. (2E)-4-hydroxy-3-methylbut-2-enyl diphosphate contacts are provided by Ser232, Ser233, Asn234, and Ser277. Residues Ser232, Ser233, Asn234, and Ser277 each contribute to the dimethylallyl diphosphate site. Isopentenyl diphosphate-binding residues include Ser232, Ser233, Asn234, and Ser277.

It belongs to the IspH family. [4Fe-4S] cluster serves as cofactor.

The catalysed reaction is isopentenyl diphosphate + 2 oxidized [2Fe-2S]-[ferredoxin] + H2O = (2E)-4-hydroxy-3-methylbut-2-enyl diphosphate + 2 reduced [2Fe-2S]-[ferredoxin] + 2 H(+). The enzyme catalyses dimethylallyl diphosphate + 2 oxidized [2Fe-2S]-[ferredoxin] + H2O = (2E)-4-hydroxy-3-methylbut-2-enyl diphosphate + 2 reduced [2Fe-2S]-[ferredoxin] + 2 H(+). Its pathway is isoprenoid biosynthesis; dimethylallyl diphosphate biosynthesis; dimethylallyl diphosphate from (2E)-4-hydroxy-3-methylbutenyl diphosphate: step 1/1. The protein operates within isoprenoid biosynthesis; isopentenyl diphosphate biosynthesis via DXP pathway; isopentenyl diphosphate from 1-deoxy-D-xylulose 5-phosphate: step 6/6. In terms of biological role, catalyzes the conversion of 1-hydroxy-2-methyl-2-(E)-butenyl 4-diphosphate (HMBPP) into a mixture of isopentenyl diphosphate (IPP) and dimethylallyl diphosphate (DMAPP). Acts in the terminal step of the DOXP/MEP pathway for isoprenoid precursor biosynthesis. The polypeptide is 4-hydroxy-3-methylbut-2-enyl diphosphate reductase (Bartonella tribocorum (strain CIP 105476 / IBS 506)).